Here is a 186-residue protein sequence, read N- to C-terminus: Large ribosomal subunit protein uL5 (186 aa).

The protein belongs to the universal ribosomal protein uL5 family. In terms of assembly, part of the 50S ribosomal subunit; part of the 5S rRNA/L5/L18/L25 subcomplex. Contacts the 5S rRNA and the P site tRNA. Forms a bridge to the 30S subunit in the 70S ribosome.

In terms of biological role, this is one of the proteins that bind and probably mediate the attachment of the 5S RNA into the large ribosomal subunit, where it forms part of the central protuberance. In the 70S ribosome it contacts protein S13 of the 30S subunit (bridge B1b), connecting the 2 subunits; this bridge is implicated in subunit movement. Contacts the P site tRNA; the 5S rRNA and some of its associated proteins might help stabilize positioning of ribosome-bound tRNAs. This Phenylobacterium zucineum (strain HLK1) protein is Large ribosomal subunit protein uL5.